A 618-amino-acid chain; its full sequence is Proline--tRNA ligase (618 aa).

This sequence belongs to the class-II aminoacyl-tRNA synthetase family. ProS type 1 subfamily. In terms of assembly, homodimer.

It is found in the cytoplasm. It carries out the reaction tRNA(Pro) + L-proline + ATP = L-prolyl-tRNA(Pro) + AMP + diphosphate. Functionally, catalyzes the attachment of proline to tRNA(Pro) in a two-step reaction: proline is first activated by ATP to form Pro-AMP and then transferred to the acceptor end of tRNA(Pro). As ProRS can inadvertently accommodate and process non-cognate amino acids such as alanine and cysteine, to avoid such errors it has two additional distinct editing activities against alanine. One activity is designated as 'pretransfer' editing and involves the tRNA(Pro)-independent hydrolysis of activated Ala-AMP. The other activity is designated 'posttransfer' editing and involves deacylation of mischarged Ala-tRNA(Pro). The misacylated Cys-tRNA(Pro) is not edited by ProRS. This chain is Proline--tRNA ligase, found in Streptococcus pyogenes serotype M4 (strain MGAS10750).